Reading from the N-terminus, the 56-residue chain is Large ribosomal subunit protein bL32 (56 aa).

Residues 1–20 (MAVPKKKKSKSKRNHRHAVW) show a composition bias toward basic residues. The interval 1 to 21 (MAVPKKKKSKSKRNHRHAVWK) is disordered.

This sequence belongs to the bacterial ribosomal protein bL32 family.

This chain is Large ribosomal subunit protein bL32, found in Prochlorococcus marinus (strain MIT 9312).